The primary structure comprises 603 residues: HAUS augmin-like complex subunit 3 (603 aa).

An N-acetylserine modification is found at Ser-2. Coiled coils occupy residues Arg-93–Met-177, Val-305–Leu-336, Leu-389–Leu-426, and Glu-458–Glu-495.

It belongs to the HAUS3 family. Component of the HAUS augmin-like complex. The complex interacts with the gamma-tubulin ring complex and this interaction is required for spindle assembly. Interacts with EML3 (phosphorylated at 'Thr-881').

The protein resides in the cytoplasm. It is found in the cytoskeleton. It localises to the microtubule organizing center. The protein localises to the centrosome. Its subcellular location is the spindle. In terms of biological role, contributes to mitotic spindle assembly, maintenance of centrosome integrity and completion of cytokinesis as part of the HAUS augmin-like complex. The protein is HAUS augmin-like complex subunit 3 (HAUS3) of Homo sapiens (Human).